Consider the following 331-residue polypeptide: Ketol-acid reductoisomerase (NADP(+)) (331 aa).

The KARI N-terminal Rossmann domain maps to A2–T182. Residues F25–Q28, S51, S53, and D83–Q86 each bind NADP(+). The active site involves H108. G134 serves as a coordination point for NADP(+). Residues T183–L328 enclose the KARI C-terminal knotted domain. Residues D191, E195, E227, and E231 each contribute to the Mg(2+) site. S252 is a substrate binding site.

Belongs to the ketol-acid reductoisomerase family. Mg(2+) is required as a cofactor.

It catalyses the reaction (2R)-2,3-dihydroxy-3-methylbutanoate + NADP(+) = (2S)-2-acetolactate + NADPH + H(+). It carries out the reaction (2R,3R)-2,3-dihydroxy-3-methylpentanoate + NADP(+) = (S)-2-ethyl-2-hydroxy-3-oxobutanoate + NADPH + H(+). The protein operates within amino-acid biosynthesis; L-isoleucine biosynthesis; L-isoleucine from 2-oxobutanoate: step 2/4. It functions in the pathway amino-acid biosynthesis; L-valine biosynthesis; L-valine from pyruvate: step 2/4. Involved in the biosynthesis of branched-chain amino acids (BCAA). Catalyzes an alkyl-migration followed by a ketol-acid reduction of (S)-2-acetolactate (S2AL) to yield (R)-2,3-dihydroxy-isovalerate. In the isomerase reaction, S2AL is rearranged via a Mg-dependent methyl migration to produce 3-hydroxy-3-methyl-2-ketobutyrate (HMKB). In the reductase reaction, this 2-ketoacid undergoes a metal-dependent reduction by NADPH to yield (R)-2,3-dihydroxy-isovalerate. This Caldanaerobacter subterraneus subsp. tengcongensis (strain DSM 15242 / JCM 11007 / NBRC 100824 / MB4) (Thermoanaerobacter tengcongensis) protein is Ketol-acid reductoisomerase (NADP(+)).